Consider the following 614-residue polypeptide: Zinc metalloproteinase dpy-31 (614 aa).

Residues 1-24 form the signal peptide; that stretch reads MSLLRCTTLLLVVVAIALPPCILG. The propeptide occupies 25–150; the sequence is YSLHDGSRLD…KTGQRRVKRK (126 aa). Residues 150–349 enclose the Peptidase M12A domain; sequence KFIGSDLRRW…IRLMNKIYCS (200 aa). A glycan (N-linked (GlcNAc...) asparagine) is linked at Asn190. Cystine bridges form between Cys193-Cys348, Cys216-Cys237, Cys352-Cys372, Cys374-Cys383, and Cys394-Cys422. His245 contributes to the Zn(2+) binding site. Glu246 is an active-site residue. Zn(2+)-binding residues include His249 and His255. The region spanning 344–384 is the EGF-like domain; it reads NKIYCSNVCSRKLPCQRGGYTDPRRCDRCRCPDGFTGQFCE. The CUB domain occupies 394-510; it reads CGGRIQVNGG…RGFEARARAL (117 aa). Asn461 carries an N-linked (GlcNAc...) asparagine glycan. The region spanning 513–562 is the TSP type-1 domain; it reads NGQWASWSPWTPCTASCGACGSRMRTRVCSHGACAGEPVENQVCNTHPCN. 3 disulfide bridges follow: Cys525–Cys556, Cys529–Cys561, and Cys541–Cys546.

Zn(2+) serves as cofactor.

It is found in the secreted. Its activity is regulated as follows. Inhibited by marimastat and tripeptide hydroxamic acids. Inhibited by 1,10-phenanthroline. Its function is as follows. Metalloprotease which cleaves the carboxyl terminus of procollagens to mature collagens. Probably involved in cuticular collagen maturation. The protein is Zinc metalloproteinase dpy-31 of Teladorsagia circumcincta (Brown stomach worm).